The following is a 145-amino-acid chain: MHYSYYPYPVPYREDPVLIRNLQKAINGEFSAIQCYRKLAELAHSDEVRKQIEEIRRDEIRHLREFSTLYGSITGKHIMPKQTEECPDNFTRGLDAAFKDEQETVDFYLRAAEETSNLKAKGVFTRAARDEQNHAVWFLYYLMER.

This is an uncharacterized protein from Bacillus subtilis (strain 168).